The sequence spans 395 residues: Thyroid hormone receptor beta (395 aa).

Residues 1 to 31 (MSEPAENCSPRWKDEAIQNGYIPSYLDKDEL) are modulating. Zn(2+) contacts are provided by cysteine 32, cysteine 35, cysteine 49, cysteine 52, cysteine 70, cysteine 76, cysteine 86, and cysteine 89. NR C4-type zinc fingers lie at residues 32 to 52 (CVVC…CEGC) and 70 to 94 (CKYE…FKKC). Positions 32–99 (CVVCGDKATG…RFKKCIAVGM (68 aa)) form a DNA-binding region, nuclear receptor. The 254-residue stretch at 142–395 (EEWDLIRMVT…PPLFLEVFED (254 aa)) folds into the NR LBD domain. Residues arginine 216, asparagine 265, and histidine 369 each contribute to the 3,3',5-triiodo-L-thyronine site. L-thyroxine is bound by residues arginine 216, asparagine 265, and histidine 369.

The protein belongs to the nuclear hormone receptor family. NR1 subfamily.

The protein resides in the nucleus. Functionally, nuclear hormone receptor that can act as a repressor or activator of transcription. High affinity receptor for thyroid hormones, including triiodothyronine and thyroxine. The polypeptide is Thyroid hormone receptor beta (thrb) (Paralichthys olivaceus (Bastard halibut)).